The following is a 574-amino-acid chain: Proline--tRNA ligase (574 aa).

The protein belongs to the class-II aminoacyl-tRNA synthetase family. ProS type 1 subfamily. In terms of assembly, homodimer.

It is found in the cytoplasm. The enzyme catalyses tRNA(Pro) + L-proline + ATP = L-prolyl-tRNA(Pro) + AMP + diphosphate. Catalyzes the attachment of proline to tRNA(Pro) in a two-step reaction: proline is first activated by ATP to form Pro-AMP and then transferred to the acceptor end of tRNA(Pro). As ProRS can inadvertently accommodate and process non-cognate amino acids such as alanine and cysteine, to avoid such errors it has two additional distinct editing activities against alanine. One activity is designated as 'pretransfer' editing and involves the tRNA(Pro)-independent hydrolysis of activated Ala-AMP. The other activity is designated 'posttransfer' editing and involves deacylation of mischarged Ala-tRNA(Pro). The misacylated Cys-tRNA(Pro) is not edited by ProRS. This chain is Proline--tRNA ligase, found in Nautilia profundicola (strain ATCC BAA-1463 / DSM 18972 / AmH).